The following is a 249-amino-acid chain: NAD-dependent protein deacylase 2 (249 aa).

Positions 1–240 (MNVADLLASS…PRLVEEVKRR (240 aa)) constitute a Deacetylase sirtuin-type domain. NAD(+) is bound at residue 18–37 (GAGISAESGVPTFRGPGGLW). Substrate-binding residues include Y62 and R65. An NAD(+)-binding site is contributed by 96–99 (QNVD). The active-site Proton acceptor is the H114. Zn(2+)-binding residues include C122, C125, C142, and C145. Residues 182–184 (GTS), 208–210 (NVE), and A226 each bind NAD(+).

Belongs to the sirtuin family. Class III subfamily. Requires Zn(2+) as cofactor.

Its subcellular location is the cytoplasm. The enzyme catalyses N(6)-acetyl-L-lysyl-[protein] + NAD(+) + H2O = 2''-O-acetyl-ADP-D-ribose + nicotinamide + L-lysyl-[protein]. It catalyses the reaction N(6)-succinyl-L-lysyl-[protein] + NAD(+) + H2O = 2''-O-succinyl-ADP-D-ribose + nicotinamide + L-lysyl-[protein]. In terms of biological role, NAD-dependent lysine deacetylase and desuccinylase that specifically removes acetyl and succinyl groups on target proteins. Modulates the activities of several proteins which are inactive in their acylated form. Deacetylates the N-terminal lysine residue of Alba, the major archaeal chromatin protein and that, in turn, increases Alba's DNA binding affinity, thereby repressing transcription. The protein is NAD-dependent protein deacylase 2 of Pyrobaculum aerophilum (strain ATCC 51768 / DSM 7523 / JCM 9630 / CIP 104966 / NBRC 100827 / IM2).